Consider the following 157-residue polypeptide: Iron-sulfur cluster repair protein DnrN (157 aa).

Belongs to the RIC family.

The protein localises to the cytoplasm. Functionally, di-iron-containing protein involved in the repair of iron-sulfur clusters damaged by oxidative and nitrosative stress conditions. Required to repair damage caused by nitric oxide to FNR and NsrR transcription factors. The sequence is that of Iron-sulfur cluster repair protein DnrN (dnrN) from Neisseria gonorrhoeae.